A 435-amino-acid chain; its full sequence is GTPase Der (435 aa).

EngA-type G domains follow at residues 4–167 (PVVA…GDKA) and 175–350 (IRFS…ENQT). GTP-binding positions include 10-17 (GRPNVGKS), 57-61 (DTGGI), 119-122 (NKAD), 181-188 (GRPNVGKS), 228-232 (DTAGI), and 293-296 (NKWD). A KH-like domain is found at 351–435 (RRIQSSVLND…PIKILARKRK (85 aa)).

This sequence belongs to the TRAFAC class TrmE-Era-EngA-EngB-Septin-like GTPase superfamily. EngA (Der) GTPase family. Associates with the 50S ribosomal subunit.

Functionally, GTPase that plays an essential role in the late steps of ribosome biogenesis. This is GTPase Der from Lactobacillus johnsonii (strain CNCM I-12250 / La1 / NCC 533).